The primary structure comprises 187 residues: MTISKLVLASGSPRRRELLAQMGYQFEVVVPNVEEKRAAAESPAQYVERLSRDKALAGAALVAAEAVVIGSDTIVVKDQQVLEKPRDFADAKRMLLKLSGSQHQVMTGVSVTCRGITHSVVVTTEVWFKTLSEQEIEAYWQSGEPCDKAGSYGIQGLGGRFVTRIEGSYHAVVGLPLYETDQLLHKF.

Asp72 acts as the Proton acceptor in catalysis.

The protein belongs to the Maf family. YhdE subfamily. A divalent metal cation serves as cofactor.

Its subcellular location is the cytoplasm. It carries out the reaction dTTP + H2O = dTMP + diphosphate + H(+). The enzyme catalyses UTP + H2O = UMP + diphosphate + H(+). Its function is as follows. Nucleoside triphosphate pyrophosphatase that hydrolyzes dTTP and UTP. May have a dual role in cell division arrest and in preventing the incorporation of modified nucleotides into cellular nucleic acids. The chain is dTTP/UTP pyrophosphatase from Vibrio cholerae serotype O1 (strain ATCC 39315 / El Tor Inaba N16961).